Here is a 120-residue protein sequence, read N- to C-terminus: UPF0231 protein YacL (120 aa).

The protein belongs to the UPF0231 family.

The sequence is that of UPF0231 protein YacL from Escherichia coli O139:H28 (strain E24377A / ETEC).